Consider the following 113-residue polypeptide: Large ribosomal subunit protein uL22 (113 aa).

It belongs to the universal ribosomal protein uL22 family. In terms of assembly, part of the 50S ribosomal subunit.

Its function is as follows. This protein binds specifically to 23S rRNA; its binding is stimulated by other ribosomal proteins, e.g. L4, L17, and L20. It is important during the early stages of 50S assembly. It makes multiple contacts with different domains of the 23S rRNA in the assembled 50S subunit and ribosome. The globular domain of the protein is located near the polypeptide exit tunnel on the outside of the subunit, while an extended beta-hairpin is found that lines the wall of the exit tunnel in the center of the 70S ribosome. In Anoxybacillus flavithermus (strain DSM 21510 / WK1), this protein is Large ribosomal subunit protein uL22.